Here is a 668-residue protein sequence, read N- to C-terminus: Fructose-1,6-bisphosphatase class 3 (668 aa).

Belongs to the FBPase class 3 family. The cofactor is Mn(2+).

It catalyses the reaction beta-D-fructose 1,6-bisphosphate + H2O = beta-D-fructose 6-phosphate + phosphate. Its pathway is carbohydrate biosynthesis; gluconeogenesis. The polypeptide is Fructose-1,6-bisphosphatase class 3 (Clostridium botulinum (strain Okra / Type B1)).